Here is a 500-residue protein sequence, read N- to C-terminus: Cytochrome P450 2D15 (500 aa).

Cys446 provides a ligand contact to heme.

This sequence belongs to the cytochrome P450 family. Heme is required as a cofactor. In terms of tissue distribution, liver. Also detected in several other tissues.

The protein localises to the endoplasmic reticulum membrane. It is found in the microsome membrane. It catalyses the reaction an organic molecule + reduced [NADPH--hemoprotein reductase] + O2 = an alcohol + oxidized [NADPH--hemoprotein reductase] + H2O + H(+). Functionally, high activity for the hydroxylation of bunitrolol and imipramine; low activity on debrisoquine. In Canis lupus familiaris (Dog), this protein is Cytochrome P450 2D15 (CYP2D15).